Here is a 120-residue protein sequence, read N- to C-terminus: Large ribosomal subunit protein uL18 (120 aa).

The protein belongs to the universal ribosomal protein uL18 family. In terms of assembly, part of the 50S ribosomal subunit; part of the 5S rRNA/L5/L18/L25 subcomplex. Contacts the 5S and 23S rRNAs.

In terms of biological role, this is one of the proteins that bind and probably mediate the attachment of the 5S RNA into the large ribosomal subunit, where it forms part of the central protuberance. The polypeptide is Large ribosomal subunit protein uL18 (Rhodospirillum rubrum (strain ATCC 11170 / ATH 1.1.1 / DSM 467 / LMG 4362 / NCIMB 8255 / S1)).